A 149-amino-acid polypeptide reads, in one-letter code: Calmodulin (149 aa).

Threonine 2 is subject to N-acetylthreonine. 4 consecutive EF-hand domains span residues 8 to 43, 44 to 79, 81 to 116, and 117 to 149; these read EQIAEFKEAFSLFDKDGDGTITTKELGTVMRSLGQN, PTEAELQDMINEVDADGNGTIDFPEFLTMMARKMKE, DSEEEIREAFRVFDKDGNGFISAAELRHVMTNLGEK, and LTDEEVDEMIREADIDGDGQVNYEEFVAMMTSK. Residues aspartate 21, aspartate 23, aspartate 25, threonine 27, glutamate 32, aspartate 57, aspartate 59, asparagine 61, threonine 63, glutamate 68, aspartate 94, aspartate 96, asparagine 98, and glutamate 105 each contribute to the Ca(2+) site. At lysine 116 the chain carries N6,N6,N6-trimethyllysine. The Ca(2+) site is built by aspartate 130, aspartate 132, aspartate 134, glutamine 136, and glutamate 141.

It belongs to the calmodulin family.

Calmodulin mediates the control of a large number of enzymes, ion channels and other proteins by Ca(2+). Among the enzymes to be stimulated by the calmodulin-Ca(2+) complex are a number of protein kinases and phosphatases. This is Calmodulin from Halichondria okadai (Marine sponge).